Here is a 301-residue protein sequence, read N- to C-terminus: GTPase Era (301 aa).

The 169-residue stretch at 7–175 (YCGFIAIVGR…AAIVRKHLPE (169 aa)) folds into the Era-type G domain. The segment at 15–22 (GRPNVGKS) is G1. 15-22 (GRPNVGKS) provides a ligand contact to GTP. The interval 41–45 (QTTRH) is G2. Residues 62 to 65 (DTPG) are G3. Residues 62–66 (DTPGL) and 124–127 (NKVD) contribute to the GTP site. The G4 stretch occupies residues 124–127 (NKVD). The segment at 154–156 (ISA) is G5. Residues 206–283 (LGAELPYSVT…HLELWVKVKS (78 aa)) enclose the KH type-2 domain.

The protein belongs to the TRAFAC class TrmE-Era-EngA-EngB-Septin-like GTPase superfamily. Era GTPase family. In terms of assembly, monomer.

The protein resides in the cytoplasm. Its subcellular location is the cell inner membrane. In terms of biological role, an essential GTPase that binds both GDP and GTP, with rapid nucleotide exchange. Plays a role in 16S rRNA processing and 30S ribosomal subunit biogenesis and possibly also in cell cycle regulation and energy metabolism. In Shigella flexneri serotype 5b (strain 8401), this protein is GTPase Era.